Reading from the N-terminus, the 859-residue chain is Envelope glycoprotein (859 aa).

Positions 1–6 (MVSIAF) are excised as a propeptide. Over 7–614 (YGGIPGGIST…KDLWSHIGNW (608 aa)) the chain is Extracellular. N-linked (GlcNAc...) asparagine; by host glycosylation is found at Asn-40, Asn-112, Asn-141, Asn-148, Asn-186, Asn-214, Asn-233, Asn-244, Asn-340, Asn-368, Asn-399, Asn-406, and Asn-411. The segment at 446–466 (FGISAIVAAIVAATAIAASAT) is fusion peptide. Asn-483 and Asn-490 each carry an N-linked (GlcNAc...) asparagine; by host glycan. Positions 498–513 (LIERQIKILYAMILQT) are immunosuppression. N-linked (GlcNAc...) asparagine; by host glycosylation is found at Asn-550 and Asn-557. Coiled coils occupy residues 576–624 (ILTT…SIIK) and 663–699 (KKFH…YYKQ). Residues 615–635 (IPGLGASIIKYIVMFLLIYLL) form a helical membrane-spanning segment. The Cytoplasmic portion of the chain corresponds to 636–859 (LTSSPKILRA…TSHVSMPQYV (224 aa)).

As to quaternary structure, the mature envelope protein (Env) consists of a trimer of SU-TM heterodimers attached by noncovalent interactions or by a labile interchain disulfide bond. In terms of processing, specific enzymatic cleavages in vivo yield mature proteins. Envelope glycoproteins are synthesized as an inactive precursor that is N-glycosylated and processed likely by host cell furin or by a furin-like protease in the Golgi to yield the mature SU and TM proteins. The cleavage site between SU and TM requires the minimal sequence [KR]-X-[KR]-R.

Its subcellular location is the virion membrane. It is found in the host cell membrane. Functionally, the surface protein (SU) attaches the virus to the host cell by binding to its receptor. This interaction triggers the refolding of the transmembrane protein (TM) and is thought to activate its fusogenic potential by unmasking its fusion peptide. Fusion occurs at the host cell plasma membrane. Its function is as follows. The transmembrane protein (TM) acts as a class I viral fusion protein. Under the current model, the protein has at least 3 conformational states: pre-fusion native state, pre-hairpin intermediate state, and post-fusion hairpin state. During viral and target cell membrane fusion, the coiled coil regions (heptad repeats) assume a trimer-of-hairpins structure, positioning the fusion peptide in close proximity to the C-terminal region of the ectodomain. The formation of this structure appears to drive apposition and subsequent fusion of viral and target cell membranes. Membranes fusion leads to delivery of the nucleocapsid into the cytoplasm. This Equine infectious anemia virus (isolate 1369) (EIAV) protein is Envelope glycoprotein (env).